We begin with the raw amino-acid sequence, 404 residues long: Hemocyanin, beta-C chain unit G (404 aa).

N38 is a glycosylation site (N-linked (GlcNAc...) asparagine). A Cu cation-binding site is contributed by H50. Cysteines 56 and 65 form a disulfide. The N-linked (GlcNAc...) asparagine glycan is linked to N60. H61 contributes to the Cu cation binding site. Residues 66-68 (CIH) constitute a cross-link (2'-(S-cysteinyl)-histidine (Cys-His)). Cu cation is bound by residues H77, H176, H180, and H207. Cystine bridges form between C166–C233 and C320–C326. N378 is a glycosylation site (N-linked (GlcNAc...) asparagine).

It belongs to the tyrosinase family. Hemocyanin subfamily. In terms of assembly, decamers of large identical subunits (450 kDa), each containing 8 globular oxygen-binding functional units. It depends on Cu(2+) as a cofactor.

Hemocyanins are copper-containing oxygen carriers occurring freely dissolved in the hemolymph of many mollusks and arthropods. In Helix pomatia (Roman snail), this protein is Hemocyanin, beta-C chain unit G.